Reading from the N-terminus, the 596-residue chain is V-type ATP synthase alpha chain (596 aa).

Residue 233 to 240 (GPFGAGKT) coordinates ATP.

The protein belongs to the ATPase alpha/beta chains family.

The catalysed reaction is ATP + H2O + 4 H(+)(in) = ADP + phosphate + 5 H(+)(out). Functionally, produces ATP from ADP in the presence of a proton gradient across the membrane. The V-type alpha chain is a catalytic subunit. This chain is V-type ATP synthase alpha chain, found in Streptococcus gordonii (strain Challis / ATCC 35105 / BCRC 15272 / CH1 / DL1 / V288).